Here is a 115-residue protein sequence, read N- to C-terminus: U3-lycotoxin-Ls1k (115 aa).

The first 20 residues, 1–20 (MKFVLLFGVLLVTLFSYSSA), serve as a signal peptide directing secretion. Residues 21–44 (EMFDDFDQADEDELLSLIEKEEAR) constitute a propeptide that is removed on maturation. 4 cysteine pairs are disulfide-bonded: C48/C63, C55/C72, C62/C87, and C74/C85.

Belongs to the neurotoxin 19 (CSTX) family. 01 subfamily. Expressed by the venom gland.

Its subcellular location is the secreted. The protein is U3-lycotoxin-Ls1k of Lycosa singoriensis (Wolf spider).